We begin with the raw amino-acid sequence, 37 residues long: MKVRASVKKICEKCRVIRRRGRVMVICVNPKHKQRQG.

Belongs to the bacterial ribosomal protein bL36 family.

This Trichodesmium erythraeum (strain IMS101) protein is Large ribosomal subunit protein bL36.